The chain runs to 432 residues: Cyclin-A2 (432 aa).

Position 1 is an N-acetylmethionine (M1). Residue S5 is modified to Phosphoserine. Disordered stretches follow at residues 26-45 and 55-75; these read LQED…QQPR and SGNP…VAPL. Phosphoserine is present on S55.

It belongs to the cyclin family. Cyclin AB subfamily. As to quaternary structure, interacts with the CDK1 and CDK2 protein kinases to form serine/threonine kinase holoenzyme complexes. Interacts with CDK1 (hyperphosphorylated form in G1 and underphosphorylated forms in S and G2). Interacts with CDK2; the interaction increases from G1 to G2. Interacts (associated with CDK2 but not with CDK1) with SCAPER; regulates the activity of CCNA2/CDK2 by transiently maintaining CCNA2 in the cytoplasm. Forms a ternary complex with CDK2 and CDKN1B; CDKN1B inhibits the kinase activity of CDK2 through conformational rearrangements. Interacts with INCA1. (Microbial infection) Interacts with human cytomegalovirus protein UL32. Polyubiquitinated via 'Lys-11'-linked ubiquitin by the anaphase-promoting complex (APC/C), leading to its degradation by the proteasome. Deubiquitinated and stabilized by USP37 enables entry into S phase. Ubiquitinated during the G1 phase by the SCF(FBXO31) complex, leading to its proteasomal degradation.

It localises to the nucleus. It is found in the cytoplasm. Functionally, cyclin which controls both the G1/S and the G2/M transition phases of the cell cycle. Functions through the formation of specific serine/threonine protein kinase holoenzyme complexes with the cyclin-dependent protein kinases CDK1 or CDK2. The cyclin subunit confers the substrate specificity of these complexes and differentially interacts with and activates CDK1 and CDK2 throughout the cell cycle. This chain is Cyclin-A2, found in Homo sapiens (Human).